Here is a 131-residue protein sequence, read N- to C-terminus: Profilin (131 aa).

It belongs to the profilin family. In terms of assembly, occurs in many kinds of cells as a complex with monomeric actin in a 1:1 ratio.

Its subcellular location is the cytoplasm. The protein localises to the cytoskeleton. Functionally, binds to actin and affects the structure of the cytoskeleton. At high concentrations, profilin prevents the polymerization of actin, whereas it enhances it at low concentrations. By binding to PIP2, it inhibits the formation of IP3 and DG. In Arachis hypogaea (Peanut), this protein is Profilin.